A 185-amino-acid polypeptide reads, in one-letter code: Ribosome-recycling factor (185 aa).

The protein belongs to the RRF family.

Its subcellular location is the cytoplasm. In terms of biological role, responsible for the release of ribosomes from messenger RNA at the termination of protein biosynthesis. May increase the efficiency of translation by recycling ribosomes from one round of translation to another. In Thermus thermophilus (strain ATCC BAA-163 / DSM 7039 / HB27), this protein is Ribosome-recycling factor.